Consider the following 86-residue polypeptide: Small ribosomal subunit protein uS15 (86 aa).

Residues 1 to 10 (MSIDTQSIIE) are compositionally biased toward polar residues. The segment at 1-21 (MSIDTQSIIENNKRSAHDTGS) is disordered.

The protein belongs to the universal ribosomal protein uS15 family. In terms of assembly, part of the 30S ribosomal subunit. Forms a bridge to the 50S subunit in the 70S ribosome, contacting the 23S rRNA.

Functionally, one of the primary rRNA binding proteins, it binds directly to 16S rRNA where it helps nucleate assembly of the platform of the 30S subunit by binding and bridging several RNA helices of the 16S rRNA. In terms of biological role, forms an intersubunit bridge (bridge B4) with the 23S rRNA of the 50S subunit in the ribosome. This chain is Small ribosomal subunit protein uS15, found in Xylella fastidiosa (strain M23).